The following is a 380-amino-acid chain: Putative glutamate--cysteine ligase 2-1 (380 aa).

The protein belongs to the glutamate--cysteine ligase type 2 family. YbdK subfamily.

The enzyme catalyses L-cysteine + L-glutamate + ATP = gamma-L-glutamyl-L-cysteine + ADP + phosphate + H(+). Functionally, ATP-dependent carboxylate-amine ligase which exhibits weak glutamate--cysteine ligase activity. This is Putative glutamate--cysteine ligase 2-1 from Mycolicibacterium vanbaalenii (strain DSM 7251 / JCM 13017 / BCRC 16820 / KCTC 9966 / NRRL B-24157 / PYR-1) (Mycobacterium vanbaalenii).